Here is a 360-residue protein sequence, read N- to C-terminus: Mannitol-1-phosphate 5-dehydrogenase (360 aa).

Residue 6–17 (ALHFGAGNIGRG) participates in NAD(+) binding.

This sequence belongs to the mannitol dehydrogenase family.

It catalyses the reaction D-mannitol 1-phosphate + NAD(+) = beta-D-fructose 6-phosphate + NADH + H(+). In Mycoplasmopsis pulmonis (strain UAB CTIP) (Mycoplasma pulmonis), this protein is Mannitol-1-phosphate 5-dehydrogenase.